The following is a 103-amino-acid chain: Large ribosomal subunit protein bL21 (103 aa).

It belongs to the bacterial ribosomal protein bL21 family. As to quaternary structure, part of the 50S ribosomal subunit. Contacts protein L20.

Functionally, this protein binds to 23S rRNA in the presence of protein L20. This is Large ribosomal subunit protein bL21 from Ralstonia nicotianae (strain ATCC BAA-1114 / GMI1000) (Ralstonia solanacearum).